The primary structure comprises 283 residues: Acetylglutamate kinase (283 aa).

Substrate is bound by residues 64–65, arginine 86, and asparagine 181; that span reads GG.

It belongs to the acetylglutamate kinase family. ArgB subfamily.

Its subcellular location is the cytoplasm. It carries out the reaction N-acetyl-L-glutamate + ATP = N-acetyl-L-glutamyl 5-phosphate + ADP. The protein operates within amino-acid biosynthesis; L-arginine biosynthesis; N(2)-acetyl-L-ornithine from L-glutamate: step 2/4. Functionally, catalyzes the ATP-dependent phosphorylation of N-acetyl-L-glutamate. The protein is Acetylglutamate kinase of Sulfurovum sp. (strain NBC37-1).